The chain runs to 373 residues: MLIGVPKEIKNNENRVAITPAGVEAFVLAGHKVYIEKGAGLGSAITDEEYVAAGAEILATAKEVFDTAEMIIKVKEPLKSEFELFKEGQILFTYLHLAPEPQLTKALLDKKITGIAYETVQLADRSLPLLTPMSEIAGRMSIQLGAQYLEKQEGGKGVLLGGVPGVEPAEVVIVGGGIVGTNAAKIAVGMGAKVTILDVNTRRLAYLDDIFGNKVTTLMSNSFNIAKAVKKADLLVGCVLIPGAKAPKLVSEEMVKSMQPGSVIVDVAIDQGGSIETIDRITTHDNPTYEKFGVIHYAVANIPGAVARTSTYALTNDTLPYALQIANKGYKQAVIENPALLKGLNTLNGKVTYEAVAKAHDLPYTPAEKALNE.

Substrate contacts are provided by R15 and K75. H96 acts as the Proton donor/acceptor in catalysis. NAD(+) contacts are provided by residues S134, 178 to 179, D198, S220, 239 to 240, 267 to 270, R280, and 299 to 302; these read IV, VL, VAID, and VANI. Catalysis depends on D270, which acts as the Proton donor/acceptor.

It belongs to the AlaDH/PNT family. Homohexamer. Trimer of dimer.

It localises to the cytoplasm. It carries out the reaction L-alanine + NAD(+) + H2O = pyruvate + NH4(+) + NADH + H(+). The protein operates within amino-acid degradation; L-alanine degradation via dehydrogenase pathway; NH(3) and pyruvate from L-alanine: step 1/1. Its function is as follows. Catalyzes the reversible reductive amination of pyruvate to L-alanine. This enzyme is a key factor in the assimilation of L-alanine as an energy source through the tricarboxylic acid cycle. This Methanococcus maripaludis (strain DSM 14266 / JCM 13030 / NBRC 101832 / S2 / LL) protein is Alanine dehydrogenase.